Reading from the N-terminus, the 360-residue chain is Phospho-N-acetylmuramoyl-pentapeptide-transferase (360 aa).

10 helical membrane-spanning segments follow: residues Gly-27 to Leu-47, Thr-73 to Leu-93, Val-98 to Leu-118, Leu-134 to Gly-154, Leu-168 to Ser-188, Gly-199 to Val-219, Leu-239 to Pro-259, Val-263 to Val-283, Ile-288 to Val-308, and Thr-337 to Leu-357.

The protein belongs to the glycosyltransferase 4 family. MraY subfamily. Mg(2+) serves as cofactor.

It is found in the cell inner membrane. It catalyses the reaction UDP-N-acetyl-alpha-D-muramoyl-L-alanyl-gamma-D-glutamyl-meso-2,6-diaminopimeloyl-D-alanyl-D-alanine + di-trans,octa-cis-undecaprenyl phosphate = di-trans,octa-cis-undecaprenyl diphospho-N-acetyl-alpha-D-muramoyl-L-alanyl-D-glutamyl-meso-2,6-diaminopimeloyl-D-alanyl-D-alanine + UMP. It functions in the pathway cell wall biogenesis; peptidoglycan biosynthesis. In terms of biological role, catalyzes the initial step of the lipid cycle reactions in the biosynthesis of the cell wall peptidoglycan: transfers peptidoglycan precursor phospho-MurNAc-pentapeptide from UDP-MurNAc-pentapeptide onto the lipid carrier undecaprenyl phosphate, yielding undecaprenyl-pyrophosphoryl-MurNAc-pentapeptide, known as lipid I. This chain is Phospho-N-acetylmuramoyl-pentapeptide-transferase, found in Rhodospirillum rubrum (strain ATCC 11170 / ATH 1.1.1 / DSM 467 / LMG 4362 / NCIMB 8255 / S1).